The following is a 343-amino-acid chain: Cytoplasmic tRNA 2-thiolation protein 1 (343 aa).

Belongs to the TtcA family. CTU1/NCS6/ATPBD3 subfamily.

The protein resides in the cytoplasm. It participates in tRNA modification; 5-methoxycarbonylmethyl-2-thiouridine-tRNA biosynthesis. Functionally, plays a central role in 2-thiolation of mcm(5)S(2)U at tRNA wobble positions of tRNA(Lys), tRNA(Glu) and tRNA(Gln). Directly binds tRNAs and probably acts by catalyzing adenylation of tRNAs, an intermediate required for 2-thiolation. It is unclear whether it acts as a sulfurtransferase that transfers sulfur from thiocarboxylated URM1 onto the uridine of tRNAs at wobble position. The protein is Cytoplasmic tRNA 2-thiolation protein 1 of Drosophila pseudoobscura pseudoobscura (Fruit fly).